The sequence spans 448 residues: Alginate biosynthesis transcriptional regulatory protein AlgB (448 aa).

The region spanning 10 to 124 (RILLVDDESA…QLRLATAKQL (115 aa)) is the Response regulatory domain. The residue at position 59 (Asp-59) is a 4-aspartylphosphate. In terms of domain architecture, Sigma-54 factor interaction spans 147–376 (LDSHSPSMMA…LRNVIERASI (230 aa)). ATP-binding positions include 175–182 (GESGTGKG) and 238–247 (ADGGTLFLDE). The H-T-H motif DNA-binding region spans 425-444 (LDQAAKTLGIDASTLYRKRK).

It participates in glycan biosynthesis; alginate biosynthesis [regulation]. In terms of biological role, positive regulator of the alginate biosynthetic gene algD. The polypeptide is Alginate biosynthesis transcriptional regulatory protein AlgB (algB) (Pseudomonas syringae pv. tomato (strain ATCC BAA-871 / DC3000)).